A 75-amino-acid polypeptide reads, in one-letter code: Pi-hexatoxin-Hi1d (75 aa).

Cystine bridges form between Cys3–Cys18, Cys10–Cys23, Cys17–Cys33, Cys40–Cys55, Cys47–Cys60, and Cys54–Cys71. 2 Domain repeats span residues 3 to 33 (CIRKWLSCVDRKNDCCEGLECYKRRHSFEVC) and 40 to 71 (CLVKWKQCDGRERDCCAGLECWKRSGNKSSVC). The interval 3–71 (CIRKWLSCVD…KRSGNKSSVC (69 aa)) is 2 X approximate repeats with cysteine pattern C-C-CC-C-C.

It belongs to the psalmotoxin-1 family. Double-knot toxin subfamily. Expressed by the venom gland.

Its subcellular location is the secreted. Functionally, this toxin potently and selectively inhibits ASIC1a, an isoform of the gene ASIC1. It incompletely inhibits ASIC1a activation in a pH-independent and slowly reversible manner. This toxin acts by binding to and stabilizing the closed state of the channel, thereby impeding the transition into a conducting state. This toxin may bind to the acidic pocket of ASIC1a, since mutation of a key residue of this pocket (Arg-350) abolishes the ability of the toxin to inhibit ASIC1a. In vivo, this toxin protects the brain from neuronal injury when administered up to 8 hours after stroke onset. In Hadronyche infensa (Fraser island funnel-web spider), this protein is Pi-hexatoxin-Hi1d.